Here is a 170-residue protein sequence, read N- to C-terminus: MELKDYIATIENYPKEGVVFRDISPLMADGNAYNYAATEIVQYARDKEIDMVVGPEARGFIIGCPVAFALGVGFAPVRKPGKLPREVIEATYEKEYGTDTLTMHSDSIKPGQRVLIVDDLLATGGTIAATIELVEKMGGVVVGCAFLIELDELKGREKIGNYDYKVLMHY.

The protein belongs to the purine/pyrimidine phosphoribosyltransferase family. In terms of assembly, homodimer.

Its subcellular location is the cytoplasm. It carries out the reaction AMP + diphosphate = 5-phospho-alpha-D-ribose 1-diphosphate + adenine. It participates in purine metabolism; AMP biosynthesis via salvage pathway; AMP from adenine: step 1/1. In terms of biological role, catalyzes a salvage reaction resulting in the formation of AMP, that is energically less costly than de novo synthesis. This chain is Adenine phosphoribosyltransferase, found in Lactococcus lactis subsp. cremoris (strain MG1363).